The following is a 341-amino-acid chain: MEGGGRGPNQTILSEIEHMPEAPRQRISHHRRARSETFFSGESIDDLLLFDPSDIDFSSLDFLNAPPPPQQSQQQPQASPMSVDSEETSSNGVVPPNSLPPKPEARFGRHVRSFSVDSDFFDDLGVTEEKFIATSSGEKKKGNHHHSRSNSMDGEMSSASFNIESILASVSGKDSGKKNMGMGGDRLAELALLDPKRAKRILANRQSAARSKERKIRYTGELERKVQTLQNEATTLSAQVTMLQRGTSELNTENKHLKMRLQALEQQAELRDALNEALRDELNRLKVVAGEIPQGNGNSYNRAQFSSQQSAMNQFGNKTNQQMSTNGQPSLPSYMDFTKRG.

Disordered stretches follow at residues 1–33 (MEGG…HRRA), 59–106 (SLDF…PEAR), and 135–156 (SSGE…DGEM). A necessary and sufficient for transient T-DNA transformation end expression region spans residues 1–162 (MEGGGRGPNQ…DGEMSSASFN (162 aa)). Positions 15-24 (EIEHMPEAPR) are enriched in basic and acidic residues. Residues 71 to 80 (QSQQQPQASP) show a composition bias toward low complexity. S79 bears the Phosphoserine mark. Residues 163 to 341 (IESILASVSG…PSYMDFTKRG (179 aa)) form an involved in homomultimerization and histone H2A binding region. The region spanning 194-257 (DPKRAKRILA…SELNTENKHL (64 aa)) is the bZIP domain. Residues 196 to 217 (KRAKRILANRQSAARSKERKIR) are basic motif. The Nuclear localization signal motif lies at 198-205 (AKRILANR). The leucine-zipper stretch occupies residues 222-257 (LERKVQTLQNEATTLSAQVTMLQRGTSELNTENKHL). Over residues 307–331 (SQQSAMNQFGNKTNQQMSTNGQPSL) the composition is skewed to polar residues. Residues 307–341 (SQQSAMNQFGNKTNQQMSTNGQPSLPSYMDFTKRG) form a disordered region.

It belongs to the bZIP family. As to quaternary structure, forms homomultimers. Interacts with Agrobacterium tumefaciens VirE2 and mediates its translocation to the host nucleus. Binds to VIP2. Forms a complex made of Agrobacterium VirE2, VIP1, VIP2 and single-stranded DNA (ssDNA). The interaction with KAP1 mediates its nuclear import. Binds to the H2A histone RAT5. Interacts with MPK3 and Agrobacterium virF. Forms a complex made of VIP1, VBF and Agrobacterium virE2. Interacts with SCF(VBF) E3 ubiquitin ligase complex. Binds directly to VBF. Forms heterodimers with BZIP34 and BZIP61. Phosphorylated by MPK3. This phosphorylation promotes nuclear localization. Mostly expressed in dividing cells, present in leaves, roots and seedlings.

Its subcellular location is the cytoplasm. The protein resides in the nucleus. Functionally, transcription activator that binds specifically to the VIP1 response elements (VREs) DNA sequence 5'-ACNGCT-3' found in some stress genes (e.g. TRX8 and MYB44), when phosphorylated/activated by MPK3. Required for Agrobacterium VirE2 nuclear import and tumorigenicity. Promotes transient expression of T-DNA in early stages by interacting with VirE2 in complex with the T-DNA and facilitating its translocation to the nucleus, and mediates stable genetic transformation by Agrobacterium by binding H2A histone. Prevents cell differentiation and shoot formation. Limits sulfate utilization efficiency (SUE) and sulfate uptake, especially in low-sulfur conditions. Plays a role in osmosensory response by binding to the 5'-AGCTGT/G-3' DNA sequence found in the promoters of the hypoosmolarity-responsive genes CYP707A1 and CYP707A3. Involved in the negative regulation of touch-induced root bending and salt-dependent root bending. This Arabidopsis thaliana (Mouse-ear cress) protein is Transcription factor VIP1.